We begin with the raw amino-acid sequence, 1581 residues long: Laminin subunit gamma-3 (1581 aa).

Residues 1–28 form the signal peptide; sequence MAVSRVLSLLATVASMALVIQETHFAAG. One can recognise a Laminin N-terminal domain in the interval 40–279; sequence RAQRCLPEFE…AVSDFSVGGR (240 aa). N-linked (GlcNAc...) asparagine glycosylation occurs at Asn-128. 16 disulfides stabilise this stretch: Cys-280/Cys-289, Cys-282/Cys-299, Cys-301/Cys-310, Cys-313/Cys-333, Cys-336/Cys-345, Cys-338/Cys-361, Cys-364/Cys-373, Cys-376/Cys-389, Cys-392/Cys-404, Cys-394/Cys-410, Cys-412/Cys-421, Cys-424/Cys-436, Cys-439/Cys-450, Cys-441/Cys-457, Cys-459/Cys-468, and Cys-471/Cys-486. Laminin EGF-like domains follow at residues 280–335, 336–391, 392–438, and 439–488; these read CKCN…ECLP, CNCS…PCQP, CDCH…GCRP, and CACN…GCSS. Residue Asn-304 is glycosylated (N-linked (GlcNAc...) asparagine). Asn-337 is a glycosylation site (N-linked (GlcNAc...) asparagine). A Laminin EGF-like 5; first part domain is found at 489-498; the sequence is CFCYGHSKVC. The 177-residue stretch at 508 to 684 folds into the Laminin IV type A domain; it reads HIRSDFRHGA…LAPPASWVET (177 aa). Asn-640 is a glycosylation site (N-linked (GlcNAc...) asparagine). A Laminin EGF-like 5; second part domain is found at 685–718; the sequence is CLCPQGYTGQFCEFCALGYKREIPHGGPYANCIP. Cystine bridges form between Cys-719-Cys-727, Cys-721-Cys-734, Cys-736-Cys-745, Cys-748-Cys-764, Cys-767-Cys-775, Cys-769-Cys-786, Cys-789-Cys-798, Cys-801-Cys-819, Cys-822-Cys-836, Cys-824-Cys-843, Cys-846-Cys-855, Cys-858-Cys-875, Cys-878-Cys-891, Cys-880-Cys-898, Cys-900-Cys-909, Cys-912-Cys-925, Cys-928-Cys-940, Cys-930-Cys-947, Cys-949-Cys-958, Cys-961-Cys-973, Cys-976-Cys-988, Cys-978-Cys-994, Cys-996-Cys-1005, and Cys-1008-Cys-1021. Laminin EGF-like domains lie at 719–766, 767–821, 822–877, 878–927, 928–975, and 976–1024; these read CTCN…DCQP, CPCP…PCRR, CQCS…KCAP, CSCD…GCQS, CKCH…GCRD, and CRCS…CQEC. Asn-849 carries N-linked (GlcNAc...) asparagine glycosylation. N-linked (GlcNAc...) asparagine glycosylation is present at Asn-991. The domain II and I stretch occupies residues 1025-1581; the sequence is PTCYALVKEE…LSSLPENCAS (557 aa). 2 coiled-coil regions span residues 1029-1046 and 1112-1153; these read ALVK…MLME and VHCA…LASL. N-linked (GlcNAc...) asparagine glycosylation is found at Asn-1162 and Asn-1196. The stretch at 1208 to 1231 forms a coiled coil; sequence RVASEAQQELEDRYQEVQAAQTAL. The N-linked (GlcNAc...) asparagine glycan is linked to Asn-1320. A disordered region spans residues 1382–1413; the sequence is KRKTKQAERMLGNAASLSSSTKKKSKEAELMS. 2 coiled-coil regions span residues 1438 to 1468 and 1510 to 1575; these read ASQT…AKQV and AQTL…LSSL. The N-linked (GlcNAc...) asparagine glycan is linked to Asn-1514.

As to quaternary structure, laminin is a complex glycoprotein, consisting of three different polypeptide chains (alpha, beta, gamma), which are bound to each other by disulfide bonds into a cross-shaped molecule comprising one long and three short arms with globules at each end. Gamma-3 is a subunit of laminin-12 (laminin-213), laminin-14 (laminin-423) and laminin-15 (laminin-523). Strongly expressed in capillaries and arterioles of kidney as well as in interstitial Leydig cells of testis.

It is found in the secreted. It localises to the extracellular space. The protein resides in the extracellular matrix. The protein localises to the basement membrane. Its function is as follows. Binding to cells via a high affinity receptor, laminin is thought to mediate the attachment, migration and organization of cells into tissues during embryonic development by interacting with other extracellular matrix components. This chain is Laminin subunit gamma-3 (Lamc3), found in Mus musculus (Mouse).